The following is a 196-amino-acid chain: MAALLMPRRNKGMRTRLGCLSHKSDSCSDFTAILPDKPNRALNYLRMYKFTATELQESRRLSTEEATRWADSFDVLLSHKYGVAAFRAFLKTEFSEENLEFWLACEEFKKTRSTAKLVSKAHRIFEEFVDVQAPREVNIDFQTREATRKNMQEPSLTCFDQAQGKVHSLMEKDSYPRFLRSKMYLDLLSQSQRRLS.

Ser-26 bears the Phosphoserine mark. The region spanning 72 to 188 is the RGS domain; that stretch reads SFDVLLSHKY…LRSKMYLDLL (117 aa).

As to quaternary structure, interacts with GNAO1 and GNAI3.

Its subcellular location is the cell membrane. It localises to the membrane. The protein localises to the perikaryon. It is found in the cell projection. The protein resides in the dendrite. Its subcellular location is the nucleus. In terms of biological role, regulates G protein-coupled receptor signaling cascades, including signaling via muscarinic acetylcholine receptor CHRM2 and dopamine receptor DRD2. Inhibits signal transduction by increasing the GTPase activity of G protein alpha subunits, thereby driving them into their inactive GDP-bound form. Modulates the activity of potassium channels that are activated in response to DRD2 and CHRM2 signaling. This chain is Regulator of G-protein signaling 8 (RGS8), found in Macaca fascicularis (Crab-eating macaque).